Consider the following 98-residue polypeptide: Citrate lyase acyl carrier protein 1 (98 aa).

Ser14 bears the O-(phosphoribosyl dephospho-coenzyme A)serine mark.

Belongs to the CitD family. As to quaternary structure, oligomer with a subunit composition of (alpha,beta,gamma)6.

It localises to the cytoplasm. Covalent carrier of the coenzyme of citrate lyase. This Salmonella paratyphi A (strain ATCC 9150 / SARB42) protein is Citrate lyase acyl carrier protein 1.